Here is a 427-residue protein sequence, read N- to C-terminus: Riboflavin transporter rft-1 (427 aa).

At 1–2 (MK) the chain is on the cytoplasmic side. Residues 3 to 23 (TFLFTFCLVAIFGSSSWIGTN) traverse the membrane as a helical segment. The Extracellular portion of the chain corresponds to 24–42 (SVWMELSLLTAKLPEGWNL). The chain crosses the membrane as a helical span at residues 43 to 63 (PSYLSAIVQIACLGPLIYSII). Residues 64–73 (HKGIKMTIPT) lie on the Cytoplasmic side of the membrane. A helical transmembrane segment spans residues 74 to 94 (VPLIFIFMVLACICQLGLCFF). Topologically, residues 95-111 (WDDTGYIFGAIRSWPLY) are extracellular. Residues 112-132 (LLLFGLAIVDAISSVLFLPFM) traverse the membrane as a helical segment. Residues 133 to 139 (AQFHPSF) are Cytoplasmic-facing. A helical transmembrane segment spans residues 140 to 160 (LNAYFVGMGLSALIPSLLSLI). The Extracellular portion of the chain corresponds to 161 to 184 (QGTSNYWCDDNKTPHYYPPRFSVS). Residues 185 to 205 (MFFLINFFFTCAAVAAFLVLY) traverse the membrane as a helical segment. Topologically, residues 206-261 (KIGAHKNSSQVEPEPKHSIQIIQGDSTTDVNEVNTESSFQETSSIPDSSSATGARL) are cytoplasmic. Residues 262-282 (AFLLLTTALVNAQMNGIVTSV) form a helical membrane-spanning segment. Residues 283 to 297 (QSYATLVYSQNTYHY) lie on the Extracellular side of the membrane. A helical membrane pass occupies residues 298–318 (AVTLSNVISPLASYLQFFVKI). Residues 319-322 (RSLP) are Cytoplasmic-facing. The chain crosses the membrane as a helical span at residues 323–343 (ILAFLTLCSSLTTAVIIYLAA). Residues 344-353 (LSPNWIFNSE) are Extracellular-facing. A helical transmembrane segment spans residues 354–374 (TAGTIISIASSLIAAGLHSYL). At 375–391 (RVMFAALLREGNQKESR) the chain is on the cytoplasmic side. Residues 392 to 412 (LFWCGAFIQIGSFTGSAIMFP) traverse the membrane as a helical segment. At 413–427 (LVNVWKLFHSAPSCR) the chain is on the extracellular side.

Belongs to the riboflavin transporter family. Expressed in intestine.

The protein resides in the cell membrane. The catalysed reaction is riboflavin(in) = riboflavin(out). With respect to regulation, activity is strongly inhibited by riboflavin analogs, such as lumiflavin and lumichrome. Functionally, riboflavin transporter. Riboflavin transport is Na(+)-independent but pH-sensitive. The protein is Riboflavin transporter rft-1 of Caenorhabditis elegans.